Consider the following 55-residue polypeptide: ATP synthase F(0) complex subunit 8 (55 aa).

Residues 8-24 form a helical membrane-spanning segment; the sequence is PWFSIMVMTWLTLALLI. Residues 35–55 are disordered; that stretch reads NPPSKKPSLITKPTPWAWPWT.

The protein belongs to the ATPase protein 8 family. In terms of assembly, component of the ATP synthase complex composed at least of ATP5F1A/subunit alpha, ATP5F1B/subunit beta, ATP5MC1/subunit c (homooctomer), MT-ATP6/subunit a, MT-ATP8/subunit 8, ATP5ME/subunit e, ATP5MF/subunit f, ATP5MG/subunit g, ATP5MK/subunit k, ATP5MJ/subunit j, ATP5F1C/subunit gamma, ATP5F1D/subunit delta, ATP5F1E/subunit epsilon, ATP5PF/subunit F6, ATP5PB/subunit b, ATP5PD/subunit d, ATP5PO/subunit OSCP. ATP synthase complex consists of a soluble F(1) head domain (subunits alpha(3) and beta(3)) - the catalytic core - and a membrane F(0) domain - the membrane proton channel (subunits c, a, 8, e, f, g, k and j). These two domains are linked by a central stalk (subunits gamma, delta, and epsilon) rotating inside the F1 region and a stationary peripheral stalk (subunits F6, b, d, and OSCP).

It is found in the mitochondrion membrane. In terms of biological role, subunit 8, of the mitochondrial membrane ATP synthase complex (F(1)F(0) ATP synthase or Complex V) that produces ATP from ADP in the presence of a proton gradient across the membrane which is generated by electron transport complexes of the respiratory chain. ATP synthase complex consist of a soluble F(1) head domain - the catalytic core - and a membrane F(1) domain - the membrane proton channel. These two domains are linked by a central stalk rotating inside the F(1) region and a stationary peripheral stalk. During catalysis, ATP synthesis in the catalytic domain of F(1) is coupled via a rotary mechanism of the central stalk subunits to proton translocation. In vivo, can only synthesize ATP although its ATP hydrolase activity can be activated artificially in vitro. Part of the complex F(0) domain. The chain is ATP synthase F(0) complex subunit 8 from Anas platyrhynchos (Mallard).